Consider the following 305-residue polypeptide: Tetraacyldisaccharide 4'-kinase (305 aa).

39–46 (SVGGNGKT) lines the ATP pocket.

Belongs to the LpxK family.

It carries out the reaction a lipid A disaccharide + ATP = a lipid IVA + ADP + H(+). Its pathway is glycolipid biosynthesis; lipid IV(A) biosynthesis; lipid IV(A) from (3R)-3-hydroxytetradecanoyl-[acyl-carrier-protein] and UDP-N-acetyl-alpha-D-glucosamine: step 6/6. Its function is as follows. Transfers the gamma-phosphate of ATP to the 4'-position of a tetraacyldisaccharide 1-phosphate intermediate (termed DS-1-P) to form tetraacyldisaccharide 1,4'-bis-phosphate (lipid IVA). The protein is Tetraacyldisaccharide 4'-kinase of Pseudoalteromonas atlantica (strain T6c / ATCC BAA-1087).